The sequence spans 326 residues: Olfactory receptor 8A1 (326 aa).

The Extracellular portion of the chain corresponds to 1-45 (MGFLSPMHPCRPPTQRRMAAGNHSTVTEFILKGLTKRADLQLPLF). Asparagine 22 is a glycosylation site (N-linked (GlcNAc...) asparagine). A helical transmembrane segment spans residues 46–66 (LLFLGIYLVTIVGNLGMITLI). Topologically, residues 67–77 (CLNSQLHTPMY) are cytoplasmic. A helical transmembrane segment spans residues 78–100 (YFLSNLSLMDLCYSSVITPKMLV). At 101–116 (NFVSEKNIISYAGCMS) the chain is on the extracellular side. Cysteine 114 and cysteine 195 are disulfide-bonded. A helical membrane pass occupies residues 117-137 (QLYFFLVFVIAECYMLTVMAY). Topologically, residues 138–150 (DRYVAICHPLLYN) are cytoplasmic. Residues 151-171 (IIMSHHTCLLLVAVVYAIGLI) form a helical membrane-spanning segment. Residues 172 to 222 (GSTIETGLMLKLPYCEHLISHYFCDILPLMKLSCSSTYDVEMTVFFSAGFN) are Extracellular-facing. The chain crosses the membrane as a helical span at residues 223-243 (IIVTSLTVLVSYTFILSSILG). The Cytoplasmic portion of the chain corresponds to 244-260 (ISTTEGRSKAFSTCSSH). The helical transmembrane segment at 261–281 (LAAVGMFYGSTAFMYLKPSTI) threads the bilayer. Topologically, residues 282-287 (SSLTQE) are extracellular. The helical transmembrane segment at 288 to 308 (NVASVFYTTVIPMLNPLIYSL) threads the bilayer. Residues 309–326 (RNKEVKAAVQKTLRGKLF) are Cytoplasmic-facing.

The protein belongs to the G-protein coupled receptor 1 family.

The protein resides in the cell membrane. Its function is as follows. Odorant receptor. The protein is Olfactory receptor 8A1 (OR8A1) of Homo sapiens (Human).